Reading from the N-terminus, the 319-residue chain is Beta-ketoacyl-[acyl-carrier-protein] synthase III (319 aa).

Catalysis depends on residues C113 and H246. The interval 247-251 is ACP-binding; sequence QANIR. N276 is a catalytic residue.

It belongs to the thiolase-like superfamily. FabH family. In terms of assembly, homodimer.

The protein localises to the cytoplasm. It catalyses the reaction malonyl-[ACP] + acetyl-CoA + H(+) = 3-oxobutanoyl-[ACP] + CO2 + CoA. The protein operates within lipid metabolism; fatty acid biosynthesis. Functionally, catalyzes the condensation reaction of fatty acid synthesis by the addition to an acyl acceptor of two carbons from malonyl-ACP. Catalyzes the first condensation reaction which initiates fatty acid synthesis and may therefore play a role in governing the total rate of fatty acid production. Possesses both acetoacetyl-ACP synthase and acetyl transacylase activities. Its substrate specificity determines the biosynthesis of branched-chain and/or straight-chain of fatty acids. This Ehrlichia ruminantium (strain Gardel) protein is Beta-ketoacyl-[acyl-carrier-protein] synthase III.